Reading from the N-terminus, the 157-residue chain is 2-C-methyl-D-erythritol 2,4-cyclodiphosphate synthase (157 aa).

A divalent metal cation-binding residues include aspartate 8 and histidine 10. 4-CDP-2-C-methyl-D-erythritol 2-phosphate-binding positions include 8-10 (DVH) and 34-35 (HS). An a divalent metal cation-binding site is contributed by histidine 42. 4-CDP-2-C-methyl-D-erythritol 2-phosphate-binding positions include 56 to 58 (DIG), 61 to 65 (FPDTD), 132 to 135 (TTTE), phenylalanine 139, and arginine 142.

This sequence belongs to the IspF family. In terms of assembly, homotrimer. The cofactor is a divalent metal cation.

The enzyme catalyses 4-CDP-2-C-methyl-D-erythritol 2-phosphate = 2-C-methyl-D-erythritol 2,4-cyclic diphosphate + CMP. It participates in isoprenoid biosynthesis; isopentenyl diphosphate biosynthesis via DXP pathway; isopentenyl diphosphate from 1-deoxy-D-xylulose 5-phosphate: step 4/6. Functionally, involved in the biosynthesis of isopentenyl diphosphate (IPP) and dimethylallyl diphosphate (DMAPP), two major building blocks of isoprenoid compounds. Catalyzes the conversion of 4-diphosphocytidyl-2-C-methyl-D-erythritol 2-phosphate (CDP-ME2P) to 2-C-methyl-D-erythritol 2,4-cyclodiphosphate (ME-CPP) with a corresponding release of cytidine 5-monophosphate (CMP). The protein is 2-C-methyl-D-erythritol 2,4-cyclodiphosphate synthase of Geotalea uraniireducens (strain Rf4) (Geobacter uraniireducens).